A 354-amino-acid polypeptide reads, in one-letter code: Guanine nucleotide-binding protein G(t) subunit alpha-3 (354 aa).

A disordered region spans residues 1–26; sequence MGIGISSESKESAKRSKELEKKLQED. Residue Gly2 is the site of N-myristoyl glycine attachment. Residues 8–26 show a composition bias toward basic and acidic residues; sequence ESKESAKRSKELEKKLQED. A G-alpha domain is found at 32-354; the sequence is RTVKLLLLGA…KENLKDCGLF (323 aa). The segment at 35–48 is G1 motif; the sequence is KLLLLGAGESGKST. Residues 40–47, 175–181, 200–204, 269–272, and Ala326 contribute to the GTP site; these read GAGESGKS, LHSRVKT, DVGGQ, and NKKD. The Mg(2+) site is built by Ser47 and Thr181. A G2 motif region spans residues 173–181; it reads DVLHSRVKT. Residues 196 to 205 are G3 motif; that stretch reads FRMFDVGGQR. The interval 265–272 is G4 motif; that stretch reads VLFLNKKD. Residues 324 to 329 form a G5 motif region; that stretch reads TCATDT.

Belongs to the G-alpha family. G(i/o/t/z) subfamily. As to quaternary structure, g proteins are composed of 3 units; alpha, beta and gamma, respectively GNAT3, GNB1 and GNG13 for Gustducin heterotrimer for bitter taste transduction. The alpha chain contains the guanine nucleotide binding site. Component of the TAS2R14-GNAT3 complex, consisting of TAS2R14, GNAT3, GNB1 and GNG2; within the complex interacts with TAS2R14; this complex plays a role in the perception of bitterness. Gustducin heterotrimer may also be composed of GNAT3, GNB3 and GNG13. In terms of tissue distribution, expressed in epithelial cells of taste buds of the circumvallate, foliate and fungiform. Detected in various region of the respiratory track. Expressed also in spermatozoa.

It is found in the cytoplasm. Its function is as follows. Guanine nucleotide-binding protein (G protein) alpha subunit playing a prominent role in bitter and sweet taste transduction as well as in umami (monosodium glutamate, monopotassium glutamate, and inosine monophosphate) taste transduction. This Bos taurus (Bovine) protein is Guanine nucleotide-binding protein G(t) subunit alpha-3 (GNAT3).